Reading from the N-terminus, the 86-residue chain is Toxin To8 (86 aa).

Positions 1-20 (MTRFVLFISCFFLIGMVVEC) are cleaved as a signal peptide. The region spanning 21 to 83 (KEGYLLGSRG…LWESDTNECG (63 aa)) is the LCN-type CS-alpha/beta domain. Cystine bridges form between Cys31-Cys82, Cys35-Cys57, Cys43-Cys63, and Cys47-Cys65. The residue at position 82 (Cys82) is a Cysteine amide.

It belongs to the long (4 C-C) scorpion toxin superfamily. Sodium channel inhibitor family. Beta subfamily. Expressed by the venom gland.

It localises to the secreted. In terms of biological role, beta toxins bind voltage-independently at site-4 of sodium channels (Nav) and shift the voltage of activation toward more negative potentials thereby affecting sodium channel activation and promoting spontaneous and repetitive firing. In Tityus obscurus (Amazonian scorpion), this protein is Toxin To8.